The sequence spans 371 residues: Terpene cyclase 6 (371 aa).

Residues aspartate 144, asparagine 266, serine 270, and glutamate 274 each coordinate Mg(2+). Positions 144-148 (DDVME) match the D(D/E)XX(D/E) motif motif. Positions 266-274 (NDLYSYDKE) match the NSE motif motif. Residues 352-359 (HHATLGRY) carry the WxxxxxRY motif motif. (2E,6E)-farnesyl diphosphate is bound by residues arginine 358 and tyrosine 359.

Belongs to the terpene synthase family. In terms of assembly, homodimer. The cofactor is Mg(2+).

It carries out the reaction (2E,6E)-farnesyl diphosphate + H2O = (-)-alpha-acorenol + diphosphate. It functions in the pathway sesquiterpene biosynthesis. Its function is as follows. Terpene cyclase that catalyzes the cyclization of farnesyl diphosphate (FPP) to the spirocyclic sesquiterpene alpha-acorenol. The chain is Terpene cyclase 6 from Gibberella fujikuroi (strain CBS 195.34 / IMI 58289 / NRRL A-6831) (Bakanae and foot rot disease fungus).